Consider the following 309-residue polypeptide: MTGTAPVSRRQYLGTAGAIIGTTAGCLTGADASIHVLAAGSLTSTIEDHIRPAFEDATDHTLRPEYHGSTTLLQLISDGTKHPDVAISADATLLRTRLFDAHADWALEFASNRLGICYVPSTPLGRRLAAGTPWWRAAVDAAPDTIAVSDPALDPLGYRTLMAFTLAATAHDAPDLRADLDPATVTKPSESQLLADVETGNHAAAVVYENMALDHDLPFLGFPDAYNFAAPERADHYASATYTTDDGTRIHGRPITYATTVLNDASNTAGGRAFVRFLAANPDMVRDAGLAVPESLPTHQGALPDALER.

The segment at residues 1 to 32 (MTGTAPVSRRQYLGTAGAIIGTTAGCLTGADA) is a signal peptide (tat-type signal).

The protein belongs to the bacterial solute-binding protein 1 family. WtpA subfamily. In terms of processing, predicted to be exported by the Tat system. The position of the signal peptide cleavage has not been experimentally proven.

This is an uncharacterized protein from Halobacterium salinarum (strain ATCC 700922 / JCM 11081 / NRC-1) (Halobacterium halobium).